The primary structure comprises 580 residues: Tricyclene synthase TPS4, chloroplastic (580 aa).

A chloroplast-targeting transit peptide spans 1–41; it reads MLLNSSFISLPSFFKSQELGRTNLLIHRNGSPLLCYATNTN. (2E)-geranyl diphosphate contacts are provided by R296, D334, D338, R475, and N478. Residues D334 and D338 each coordinate Mg(2+). The DDXXD motif signature appears at 334 to 338; the sequence is DDIYD. Residues N478, T482, and E486 each coordinate Mg(2+).

This sequence belongs to the terpene synthase family. Tpsb subfamily. Mg(2+) serves as cofactor. It depends on Mn(2+) as a cofactor. In terms of tissue distribution, expressed in leaves.

It is found in the plastid. It localises to the chloroplast stroma. The catalysed reaction is (2E)-geranyl diphosphate = tricyclene + diphosphate. The enzyme catalyses (2E)-geranyl diphosphate = (E)-beta-ocimene + diphosphate. It participates in secondary metabolite biosynthesis; terpenoid biosynthesis. In terms of biological role, promotes the emission of terpenes volatile organic compounds (VOC) in response to damage mediated by arthropod herbivores (e.g. Spodoptera exigua), probably to attract natural enemies of the herbivores. The sequence is that of Tricyclene synthase TPS4, chloroplastic (TPS4) from Medicago truncatula (Barrel medic).